We begin with the raw amino-acid sequence, 128 residues long: Prokineticin-2 (128 aa).

The first 27 residues, 1–27, serve as a signal peptide directing secretion; that stretch reads MRSSRCARLLLLLLLPPLLLTPPAGDA. Cystine bridges form between Cys-34–Cys-46, Cys-40–Cys-58, Cys-45–Cys-106, Cys-68–Cys-114, and Cys-108–Cys-124. Residues 71–95 form a disordered region; it reads MTRKNHFGNGRQERRKRKRRRKKKV. Over residues 83 to 95 the composition is skewed to basic residues; it reads ERRKRKRRRKKKV.

Belongs to the AVIT (prokineticin) family.

The protein resides in the secreted. Functionally, may function as an output molecule from the suprachiasmatic nucleus (SCN) that transmits behavioral circadian rhythm. May also function locally within the SCN to synchronize output. Potently contracts gastrointestinal (GI) smooth muscle. The polypeptide is Prokineticin-2 (PROK2) (Bos taurus (Bovine)).